Reading from the N-terminus, the 218-residue chain is rRNA methyltransferase 2, mitochondrial (218 aa).

S-adenosyl-L-methionine contacts are provided by residues P59–W62, D80, D96–I97, and D133. K173 functions as the Proton acceptor in the catalytic mechanism.

It belongs to the class I-like SAM-binding methyltransferase superfamily. RNA methyltransferase RlmE family.

The protein resides in the mitochondrion. The enzyme catalyses a uridine in 21S rRNA + S-adenosyl-L-methionine = a 2'-O-methyluridine in 21S rRNA + S-adenosyl-L-homocysteine + H(+). Its function is as follows. S-adenosyl-L-methionine-dependent 2'-O-ribose methyltransferase that catalyzes the formation of the 2'-O-methyluridine corresponding to position 2791 in S.cerevisiae 21S mitochondrial large subunit ribosomal RNA (mtLSU rRNA), a universally conserved modification in the peptidyl transferase domain of the mtLSU rRNA. This Schizosaccharomyces pombe (strain 972 / ATCC 24843) (Fission yeast) protein is rRNA methyltransferase 2, mitochondrial.